The following is a 303-amino-acid chain: Monoglyceride lipase (303 aa).

T10 is modified (phosphothreonine). Y58 carries the 3'-nitrotyrosine modification. Residue S122 is the Nucleophile of the active site. S189 carries the phosphoserine modification. Catalysis depends on charge relay system residues D239 and H269.

This sequence belongs to the AB hydrolase superfamily. Monoacylglycerol lipase family. Homodimer. Ubiquitous. Highly expressed in adipose tissue, adrenal gland, ovary, heart, spleen, lung, skeletal muscle, kidney and testis. Highly expressed throughout the brain.

It is found in the cytoplasm. It localises to the cytosol. The protein resides in the membrane. The enzyme catalyses Hydrolyzes glycerol monoesters of long-chain fatty acids.. The catalysed reaction is a 1-acylglycerol + H2O = glycerol + a fatty acid + H(+). It catalyses the reaction a 2-acylglycerol + H2O = glycerol + a fatty acid + H(+). It carries out the reaction 1-octanoylglycerol + H2O = octanoate + glycerol + H(+). The enzyme catalyses 2-(5Z,8Z,11Z,14Z-eicosatetraenoyl)-glycerol + H2O = glycerol + (5Z,8Z,11Z,14Z)-eicosatetraenoate + H(+). The catalysed reaction is 1-decanoylglycerol + H2O = decanoate + glycerol + H(+). It catalyses the reaction 1-dodecanoylglycerol + H2O = dodecanoate + glycerol + H(+). It carries out the reaction 1-tetradecanoylglycerol + H2O = tetradecanoate + glycerol + H(+). The enzyme catalyses 2-hexadecanoylglycerol + H2O = glycerol + hexadecanoate + H(+). The catalysed reaction is 1-(9Z-octadecenoyl)-glycerol + H2O = glycerol + (9Z)-octadecenoate + H(+). It catalyses the reaction 2-(9Z-octadecenoyl)-glycerol + H2O = glycerol + (9Z)-octadecenoate + H(+). It carries out the reaction 2-(9Z,12Z-octadecadienoyl)-glycerol + H2O = (9Z,12Z)-octadecadienoate + glycerol + H(+). The enzyme catalyses 1-(5Z,8Z,11Z,14Z-eicosatetraenoyl)-glycerol + H2O = glycerol + (5Z,8Z,11Z,14Z)-eicosatetraenoate + H(+). The catalysed reaction is 1-(9Z,12Z-octadecadienoyl)-glycerol + H2O = (9Z,12Z)-octadecadienoate + glycerol + H(+). It catalyses the reaction 1-hexadecanoylglycerol + H2O = glycerol + hexadecanoate + H(+). It carries out the reaction 1-octadecanoylglycerol + H2O = octadecanoate + glycerol + H(+). The enzyme catalyses prostaglandin E2 1-glyceryl ester + H2O = prostaglandin E2 + glycerol + H(+). The catalysed reaction is prostaglandin D2-1-glycerol ester + H2O = prostaglandin D2 + glycerol + H(+). It catalyses the reaction 2-glyceryl-15-deoxy-Delta(12,14)-prostaglandin J2 + H2O = 15-deoxy-Delta(12,14)-prostaglandin J2 + glycerol + H(+). It carries out the reaction prostaglandin F2alpha 1-glyceryl ester + H2O = prostaglandin F2alpha + glycerol + H(+). The protein operates within glycerolipid metabolism; triacylglycerol degradation. Functionally, converts monoacylglycerides to free fatty acids and glycerol. Hydrolyzes the endocannabinoid 2-arachidonoylglycerol, and thereby contributes to the regulation of endocannabinoid signaling, nociperception and perception of pain. Regulates the levels of fatty acids that serve as signaling molecules and promote cancer cell migration, invasion and tumor growth. This is Monoglyceride lipase from Rattus norvegicus (Rat).